The following is a 147-amino-acid chain: Small ribosomal subunit protein bS6 (147 aa).

Over residues 97 to 141 the composition is skewed to basic and acidic residues; that stretch reads EEGPSAMMRKADRDRERDDRGGGFRGDREGGFRGDRGPRRPREEA. The disordered stretch occupies residues 97–147; that stretch reads EEGPSAMMRKADRDRERDDRGGGFRGDREGGFRGDRGPRRPREEAPAVVEE.

This sequence belongs to the bacterial ribosomal protein bS6 family.

Its function is as follows. Binds together with bS18 to 16S ribosomal RNA. The chain is Small ribosomal subunit protein bS6 from Nitrobacter hamburgensis (strain DSM 10229 / NCIMB 13809 / X14).